A 304-amino-acid chain; its full sequence is Proteasome subunit beta (304 aa).

A propeptide spans 1 to 65 (MTWPHFEQLA…LTPTDAVPHG (65 aa)) (removed in mature form; by autocatalysis). Catalysis depends on T66, which acts as the Nucleophile.

It belongs to the peptidase T1B family. The 20S proteasome core is composed of 14 alpha and 14 beta subunits that assemble into four stacked heptameric rings, resulting in a barrel-shaped structure. The two inner rings, each composed of seven catalytic beta subunits, are sandwiched by two outer rings, each composed of seven alpha subunits. The catalytic chamber with the active sites is on the inside of the barrel. Has a gated structure, the ends of the cylinder being occluded by the N-termini of the alpha-subunits. Is capped by the proteasome-associated ATPase, ARC.

The protein localises to the cytoplasm. The enzyme catalyses Cleavage of peptide bonds with very broad specificity.. The protein operates within protein degradation; proteasomal Pup-dependent pathway. With respect to regulation, the formation of the proteasomal ATPase ARC-20S proteasome complex, likely via the docking of the C-termini of ARC into the intersubunit pockets in the alpha-rings, may trigger opening of the gate for substrate entry. Interconversion between the open-gate and close-gate conformations leads to a dynamic regulation of the 20S proteasome proteolysis activity. Its function is as follows. Component of the proteasome core, a large protease complex with broad specificity involved in protein degradation. The sequence is that of Proteasome subunit beta from Mycobacterium sp. (strain JLS).